We begin with the raw amino-acid sequence, 507 residues long: Alkyl hydroperoxide reductase subunit F (507 aa).

Residue 207 to 222 participates in FAD binding; the sequence is DVLIVGGGPASGSAAI. An intrachain disulfide couples Cys335 to Cys338. 347–361 is a binding site for NAD(+); that stretch reads DVAVIGGGNSGVEAA. 467 to 477 contacts FAD; sequence TNVPGIFAAGD.

Belongs to the class-II pyridine nucleotide-disulfide oxidoreductase family. Homodimer. Requires FAD as cofactor.

In terms of biological role, serves to protect the cell against DNA damage by alkyl hydroperoxides. It can use either NADH or NADPH as electron donor for direct reduction of redox dyes or of alkyl hydroperoxides when combined with the AhpC protein. The polypeptide is Alkyl hydroperoxide reductase subunit F (ahpF) (Staphylococcus epidermidis (strain ATCC 35984 / DSM 28319 / BCRC 17069 / CCUG 31568 / BM 3577 / RP62A)).